The chain runs to 173 residues: Sterile alpha motif domain-containing protein 5 (173 aa).

The SAM domain maps to 1 to 65 (MCTNIVYEWL…LEAVRRLREQ (65 aa)). The tract at residues 75-119 (TLEPQPAPPGPPADAVPTGRRGEPCGGPAQGTRGDSRGHTTAPRS) is disordered. Residues 79–88 (QPAPPGPPAD) show a composition bias toward pro residues.

In terms of assembly, interacts promiscuously (via SAM domain) with EPHA5, EPHA6, EPHA7, EPHA8, EPHB1, EPHB2, EPHB3 and EPHB4 (via SAM domain) (in vitro). Detected in biliary epithelial cells on bile ducts at the hepatic hilum (at protein level).

Its subcellular location is the cytoplasm. The polypeptide is Sterile alpha motif domain-containing protein 5 (SAMD5) (Homo sapiens (Human)).